A 472-amino-acid polypeptide reads, in one-letter code: 3-isopropylmalate dehydratase large subunit (472 aa).

[4Fe-4S] cluster contacts are provided by C352, C412, and C415.

This sequence belongs to the aconitase/IPM isomerase family. LeuC type 1 subfamily. Heterodimer of LeuC and LeuD. It depends on [4Fe-4S] cluster as a cofactor.

The catalysed reaction is (2R,3S)-3-isopropylmalate = (2S)-2-isopropylmalate. The protein operates within amino-acid biosynthesis; L-leucine biosynthesis; L-leucine from 3-methyl-2-oxobutanoate: step 2/4. Catalyzes the isomerization between 2-isopropylmalate and 3-isopropylmalate, via the formation of 2-isopropylmaleate. This is 3-isopropylmalate dehydratase large subunit from Roseiflexus castenholzii (strain DSM 13941 / HLO8).